The following is a 562-amino-acid chain: Calcium-dependent protein kinase 5 (562 aa).

The region spanning 118-372 (ELDKYKLGKG…VHKIVNHKWF (255 aa)) is the Protein kinase domain. ATP contacts are provided by residues 124-132 (LGKGSYGNV) and Lys147. Asp238 serves as the catalytic Proton acceptor. Positions 394 to 402 (KFKKFHKLC) match the J domain autoinhibitory motif motif. The interval 394-429 (KFKKFHKLCKIKKLAITCIAYQLNKKKFGKMKKTFE) is j domain. The J domain EF-hand interaction motif motif lies at 403–412 (KIKKLAITCI). 4 consecutive EF-hand domains span residues 419 to 453 (KKFG…VGDN), 454 to 489 (EIDR…HSIL), 490 to 525 (EQDA…SNDQ), and 528 to 562 (FSKE…GRQS). Asp432, Asn434, Asp436, Glu443, Asp467, Asp469, Asn471, Glu478, Asp503, Asn505, Asp507, Glu514, Asp541, Asn543, Asp545, Tyr547, and Glu552 together coordinate Ca(2+).

The protein belongs to the protein kinase superfamily. Ser/Thr protein kinase family. CDPK subfamily. The cofactor is Mg(2+). May be palmitoylated. In terms of processing, autophosphorylated in vitro.

Its subcellular location is the cytoplasm. It localises to the cytoplasmic vesicle. The protein resides in the secretory vesicle. It is found in the microneme membrane. The protein localises to the cell membrane. It catalyses the reaction L-seryl-[protein] + ATP = O-phospho-L-seryl-[protein] + ADP + H(+). It carries out the reaction L-threonyl-[protein] + ATP = O-phospho-L-threonyl-[protein] + ADP + H(+). Its activity is regulated as follows. Activated by calcium. Upon calcium binding to the EF-hand domains, the C-terminus of the junction domain (J domain) undergoes a conformational change which results in the dissociation of the pseudo-substrate inhibitory motif from the catalytic domain. This, in turn, may facilitate the autophosphorylation of the activation loop at Thr-278, which leads to the kinase activation. Calcium-dependent protein kinase which acts as a sensor and effector of intracellular Ca(2+) levels probably in part downstream of cGMP-activated PKG kinase. Plays a central role in host erythrocytes and hepatocytes infection cycles. During the liver stage, involved in sporozoite motility and thus in sporozoite invasion of host hepatocytes, probably together with CDPK1 and CDPK4. Involved in merosome egress from host hepatocytes, probably together with CDPK4. Required for the release of hepatic merozoites from merosomes in the host blood stream. During the asexual blood stage, required for merozoite egress from host erythrocytes by triggering microneme secretion. Phosphorylates transporter NPT1 at late schizont stage. The protein is Calcium-dependent protein kinase 5 of Plasmodium berghei (strain Anka).